Here is a 483-residue protein sequence, read N- to C-terminus: Pre-glycoprotein polyprotein GP complex (483 aa).

Gly2 is lipidated: N-myristoyl glycine; by host. Residues 2–17 (GQLVSFIGEIPAIVHE) are Extracellular-facing. Residues 18 to 32 (ALNVALIAVSIIAIM) traverse the membrane as a helical segment. A topological domain (cytoplasmic) is located at residue Lys33. A helical transmembrane segment spans residues 34-53 (GLINIWKSGLFQLIMFLILA). Extracellular-facing segments span residues 54–58 (GRSCS) and 59–422 (ISIG…SLVD). Cys57 lines the Zn(2+) pocket. 4 N-linked (GlcNAc...) asparagine; by host glycosylation sites follow: Asn73, Asn88, Asn130, and Asn179. 5 disulfides stabilise this stretch: Cys85/Cys223, Cys186/Cys204, Cys269/Cys282, Cys291/Cys300, and Cys354/Cys375. Asn216 carries an N-linked (GlcNAc...) asparagine; by host glycan. Residues Asn355, Asn363, Asn380, and Asn385 are each glycosylated (N-linked (GlcNAc...) asparagine; by host). The helical transmembrane segment at 423–443 (LCFWSTLFYTASIFLHLLHIP) threads the bilayer. The Cytoplasmic portion of the chain corresponds to 444-483 (THRHIIGEGCPKPHRLTSDSLCACGFFQLKGRPTRWARIP). Residues His445, His447, Cys453, His457, Cys465, and Cys467 each coordinate Zn(2+).

The protein belongs to the arenaviridae GPC protein family. Homotetramer; disulfide-linked. In terms of assembly, homotetramer. GP2 homotetramers bind through ionic interactions with GP1 homotetramers to form the GP complex together with the stable signal peptide. The GP-C polyprotein interacts with the host protease MBTPS1/SKI-1 resulting in the polyprotein processing. Specific enzymatic cleavages in vivo yield mature proteins. GP-C polyprotein is cleaved in the endoplasmic reticulum by the host protease MBTPS1. Only cleaved glycoprotein is incorporated into virions. Post-translationally, the SSP remains stably associated with the GP complex following cleavage by signal peptidase and plays crucial roles in the trafficking of GP through the secretory pathway. In terms of processing, myristoylation is necessary for GP2-mediated fusion activity.

The protein resides in the virion membrane. It is found in the host endoplasmic reticulum membrane. It localises to the host Golgi apparatus membrane. Its subcellular location is the host cell membrane. Class I viral fusion protein that directs fusion of viral and host endosomal membranes, leading to delivery of the nucleocapsid into the cytoplasm. Membrane fusion is mediated by irreversible conformational changes induced upon acidification in the endosome. Functionally, stable signal peptide (SSP): cleaved and functions as a signal peptide. In addition, it is also retained as the third component of the GP complex. The SSP is required for efficient glycoprotein expression, post-translational maturation cleavage of GP1 and GP2, glycoprotein transport to the cell surface plasma membrane, formation of infectious virus particles, and acid pH-dependent glycoprotein-mediated cell fusion. In terms of biological role, interacts with the host receptor. This Peromyscus californicus (California mouse) protein is Pre-glycoprotein polyprotein GP complex.